Consider the following 422-residue polypeptide: Metallocarboxypeptidase A-like protein TRV_02598 (422 aa).

The N-terminal stretch at 1–16 (MQSLLLLATLLGSALG) is a signal peptide. Residues 17-119 (GAIPSQSANY…ELLTLDGGAN (103 aa)) constitute a propeptide, activation peptide. Residues 125-421 (SYHKYEDHLK…AGVKAMFSKL (297 aa)) form the Peptidase M14 domain. The Zn(2+) site is built by His-185 and Glu-188. Substrate-binding positions include 185-188 (HARE), Arg-240, and 256-257 (NR). A disulfide bridge connects residues Cys-250 and Cys-273. Residue His-311 participates in Zn(2+) binding. 312 to 313 (SY) is a binding site for substrate. Glu-387 serves as the catalytic Proton donor/acceptor.

This sequence belongs to the peptidase M14 family. Requires Zn(2+) as cofactor.

Its subcellular location is the secreted. Functionally, extracellular metalloprotease that contributes to pathogenicity. This chain is Metallocarboxypeptidase A-like protein TRV_02598, found in Trichophyton verrucosum (strain HKI 0517).